A 74-amino-acid polypeptide reads, in one-letter code: Small ribosomal subunit protein bS18 (74 aa).

It belongs to the bacterial ribosomal protein bS18 family. Part of the 30S ribosomal subunit. Forms a tight heterodimer with protein bS6.

Its function is as follows. Binds as a heterodimer with protein bS6 to the central domain of the 16S rRNA, where it helps stabilize the platform of the 30S subunit. The polypeptide is Small ribosomal subunit protein bS18 (Alkalilimnicola ehrlichii (strain ATCC BAA-1101 / DSM 17681 / MLHE-1)).